A 327-amino-acid polypeptide reads, in one-letter code: MTIGKSPILLHHHVIFLLLLVLQVSGQHQPRTTAPPYIAQRPNQVPAVIIAMLMFTLLFSMLACCVCYKYTNTSPHGTSSDTEEGGHGEVAFTRRTSRGLGKDVINSFPSFLYSQVKGLKIGKGGVECAICLNEFEDEETLRLMPPCSHAFHASCIDVWLSSRSTCPVCRASLPPKPGSDQNSLYPFIRPHDNQDMDLENVTARRSVLESPDVRLLDRLSWSNNTGANTPPRSRSTGLSNWRITELLFPRSHSTGHSLVPRVENLDRFTLQLPEEVRRQLSHMKTLPQARSSREGYRSGSVGSERRGKGKEKEFGEGSFDRLKAEMV.

The N-terminal stretch at 1-26 (MTIGKSPILLHHHVIFLLLLVLQVSG) is a signal peptide. A helical transmembrane segment spans residues 47–67 (AVIIAMLMFTLLFSMLACCVC). The RING-type; atypical zinc-finger motif lies at 128 to 170 (CAICLNEFEDEETLRLMPPCSHAFHASCIDVWLSSRSTCPVCR). Residues 280-327 (LSHMKTLPQARSSREGYRSGSVGSERRGKGKEKEFGEGSFDRLKAEMV) are disordered. Positions 303–327 (SERRGKGKEKEFGEGSFDRLKAEMV) are enriched in basic and acidic residues.

It belongs to the RING-type zinc finger family. ATL subfamily.

It is found in the membrane. It catalyses the reaction S-ubiquitinyl-[E2 ubiquitin-conjugating enzyme]-L-cysteine + [acceptor protein]-L-lysine = [E2 ubiquitin-conjugating enzyme]-L-cysteine + N(6)-ubiquitinyl-[acceptor protein]-L-lysine.. It participates in protein modification; protein ubiquitination. This Arabidopsis thaliana (Mouse-ear cress) protein is RING-H2 finger protein ATL34 (ATL34).